The following is a 304-amino-acid chain: NADH-cytochrome b5 reductase 2 (304 aa).

Residues 9 to 29 form a helical membrane-spanning segment; it reads MLVALAVIGVTVLLFLIKALG. In terms of domain architecture, FAD-binding FR-type spans 43–155; sequence NAKYPLPLIE…RGPNGLLVYK (113 aa). FAD contacts are provided by residues 135-150 and 174-209; these read DSLK…GPNG and VAKH…KCSL.

The protein belongs to the flavoprotein pyridine nucleotide cytochrome reductase family. The cofactor is FAD.

The protein localises to the membrane. It carries out the reaction 2 Fe(III)-[cytochrome b5] + NADH = 2 Fe(II)-[cytochrome b5] + NAD(+) + H(+). NADH-cytochrome b5 reductases are involved in desaturation and elongation of fatty acids, cholesterol biosynthesis and drug metabolism. The polypeptide is NADH-cytochrome b5 reductase 2 (cyb5r2) (Xenopus tropicalis (Western clawed frog)).